Consider the following 362-residue polypeptide: Ferrochelatase (362 aa).

Residues H212 and E294 each coordinate Fe cation.

Belongs to the ferrochelatase family.

It is found in the cytoplasm. The catalysed reaction is heme b + 2 H(+) = protoporphyrin IX + Fe(2+). It functions in the pathway porphyrin-containing compound metabolism; protoheme biosynthesis; protoheme from protoporphyrin-IX: step 1/1. Functionally, catalyzes the ferrous insertion into protoporphyrin IX. This is Ferrochelatase from Leptospira biflexa.